The sequence spans 446 residues: tRNA-2-methylthio-N(6)-dimethylallyladenosine synthase (446 aa).

Residues 3–120 (KKLFIETHGC…LPEMIDAARS (118 aa)) enclose the MTTase N-terminal domain. Cys12, Cys49, Cys83, Cys157, Cys161, and Cys164 together coordinate [4Fe-4S] cluster. The Radical SAM core domain occupies 143–375 (RVDGPTAFVS…QSRIHQQGYE (233 aa)). The region spanning 378 to 442 (RRMVGSTQRI…PHSLRGTLID (65 aa)) is the TRAM domain.

Belongs to the methylthiotransferase family. MiaB subfamily. Monomer. Requires [4Fe-4S] cluster as cofactor.

The protein localises to the cytoplasm. It carries out the reaction N(6)-dimethylallyladenosine(37) in tRNA + (sulfur carrier)-SH + AH2 + 2 S-adenosyl-L-methionine = 2-methylsulfanyl-N(6)-dimethylallyladenosine(37) in tRNA + (sulfur carrier)-H + 5'-deoxyadenosine + L-methionine + A + S-adenosyl-L-homocysteine + 2 H(+). Its function is as follows. Catalyzes the methylthiolation of N6-(dimethylallyl)adenosine (i(6)A), leading to the formation of 2-methylthio-N6-(dimethylallyl)adenosine (ms(2)i(6)A) at position 37 in tRNAs that read codons beginning with uridine. The protein is tRNA-2-methylthio-N(6)-dimethylallyladenosine synthase of Pseudomonas aeruginosa (strain UCBPP-PA14).